The primary structure comprises 161 residues: Urease accessory protein UreE (161 aa).

It belongs to the UreE family. In terms of assembly, homodimer.

Its subcellular location is the cytoplasm. Involved in urease metallocenter assembly. Binds nickel. Probably functions as a nickel donor during metallocenter assembly. It is not essential for urease activity. The chain is Urease accessory protein UreE from Proteus mirabilis (strain HI4320).